The following is a 702-amino-acid chain: Elongation factor G (702 aa).

Residues 8–290 enclose the tr-type G domain; sequence ERYRNIGISA…AVIDYLPSPV (283 aa). Residues 17–24, 88–92, and 142–145 each bind GTP; these read AHIDAGKT, DTPGH, and NKMD.

The protein belongs to the TRAFAC class translation factor GTPase superfamily. Classic translation factor GTPase family. EF-G/EF-2 subfamily.

Its subcellular location is the cytoplasm. Its function is as follows. Catalyzes the GTP-dependent ribosomal translocation step during translation elongation. During this step, the ribosome changes from the pre-translocational (PRE) to the post-translocational (POST) state as the newly formed A-site-bound peptidyl-tRNA and P-site-bound deacylated tRNA move to the P and E sites, respectively. Catalyzes the coordinated movement of the two tRNA molecules, the mRNA and conformational changes in the ribosome. This chain is Elongation factor G, found in Acidovorax sp. (strain JS42).